Consider the following 122-residue polypeptide: Small ribosomal subunit protein uS13 (122 aa).

The disordered stretch occupies residues 95 to 122 (SLPVRGQRTHTNARTRKGPAKSIAGKKK).

The protein belongs to the universal ribosomal protein uS13 family. Part of the 30S ribosomal subunit. Forms a loose heterodimer with protein S19. Forms two bridges to the 50S subunit in the 70S ribosome.

Functionally, located at the top of the head of the 30S subunit, it contacts several helices of the 16S rRNA. In the 70S ribosome it contacts the 23S rRNA (bridge B1a) and protein L5 of the 50S subunit (bridge B1b), connecting the 2 subunits; these bridges are implicated in subunit movement. Contacts the tRNAs in the A and P-sites. The polypeptide is Small ribosomal subunit protein uS13 (Mesorhizobium japonicum (strain LMG 29417 / CECT 9101 / MAFF 303099) (Mesorhizobium loti (strain MAFF 303099))).